A 466-amino-acid chain; its full sequence is 3-isopropylmalate dehydratase large subunit (466 aa).

3 residues coordinate [4Fe-4S] cluster: Cys-347, Cys-407, and Cys-410.

This sequence belongs to the aconitase/IPM isomerase family. LeuC type 1 subfamily. In terms of assembly, heterodimer of LeuC and LeuD. [4Fe-4S] cluster serves as cofactor.

The enzyme catalyses (2R,3S)-3-isopropylmalate = (2S)-2-isopropylmalate. Its pathway is amino-acid biosynthesis; L-leucine biosynthesis; L-leucine from 3-methyl-2-oxobutanoate: step 2/4. Catalyzes the isomerization between 2-isopropylmalate and 3-isopropylmalate, via the formation of 2-isopropylmaleate. This chain is 3-isopropylmalate dehydratase large subunit, found in Citrobacter koseri (strain ATCC BAA-895 / CDC 4225-83 / SGSC4696).